The chain runs to 82 residues: Small ribosomal subunit protein eS21z (82 aa).

The residue at position 1 (Met1) is an N-acetylmethionine.

Belongs to the eukaryotic ribosomal protein eS21 family.

The protein is Small ribosomal subunit protein eS21z (RPS21B) of Arabidopsis thaliana (Mouse-ear cress).